The following is a 472-amino-acid chain: Fumarate hydratase class II (472 aa).

The segment at 1–20 is disordered; the sequence is MSPHENPSVETRTESDTFGP. Substrate-binding positions include 105–107, 136–139, 146–148, and Thr194; these read SGT, HPND, and SSN. The disordered stretch occupies residues 127 to 149; sequence GKRGGKSPVHPNDHCNRGQSSND. His195 serves as the catalytic Proton donor/acceptor. Ser325 is a catalytic residue. Substrate-binding positions include Ser326 and 331 to 333; that span reads KVN.

This sequence belongs to the class-II fumarase/aspartase family. Fumarase subfamily. In terms of assembly, homotetramer.

It localises to the cytoplasm. The enzyme catalyses (S)-malate = fumarate + H2O. Its pathway is carbohydrate metabolism; tricarboxylic acid cycle; (S)-malate from fumarate: step 1/1. Functionally, involved in the TCA cycle. Catalyzes the stereospecific interconversion of fumarate to L-malate. This Methylorubrum extorquens (strain ATCC 14718 / DSM 1338 / JCM 2805 / NCIMB 9133 / AM1) (Methylobacterium extorquens) protein is Fumarate hydratase class II.